Here is an 87-residue protein sequence, read N- to C-terminus: U3-theraphotoxin-Cg1b (87 aa).

The N-terminal stretch at 1-23 is a signal peptide; sequence MRTLTLIAIVTCAALVIFHAAAA. A propeptide spanning residues 24-48 is cleaved from the precursor; the sequence is EELEAQDVIQPEDIFTGVATLEEDR. 3 disulfide bridges follow: C52–C65, C56–C79, and C73–C84.

This sequence belongs to the neurotoxin 12 (Hwtx-2) family. 03 (juruin) subfamily. Expressed by the venom gland.

It is found in the secreted. In terms of biological role, probable ion channel inhibitor. The polypeptide is U3-theraphotoxin-Cg1b (Chilobrachys guangxiensis (Chinese earth tiger tarantula)).